The chain runs to 390 residues: MRALNNSYDVVVVGAGPAGSMASYNASKNGAKTLLLEKSQEIGTPVRCAEAVPRLEDFGINPDPSFVRSYIKGGYLIAPNGKQVVVKGGKTDGYVVERKVFDKYLAIRSGQAGTQIAVKSRVTGIEKTDDGYNVFVNYLGDEYIVKTKIVIAADGVESNIAEYAGLKSKKSHKEICSCAEYEMTNVKLLDNEMMEFYFGDICPKGYIWLFPKGDTVNVGIGIIDSKKRAIDYLDEFLTNPLVKGRLDNAVPVEFKVGGDPVGGPIEKTVADNIMVVGDAAGHVSPLTGGGIGLSMSCGLMAGDVAAQSIKAEDHSREFLSAYEKRWKEKYYKPLMKDLKYKTILQKLSDEELNAIADSIPENLEEVDVGKLAVKIVAKAPSLLRHFKELI.

Residues alanine 18, glutamate 37, cysteine 48, alanine 49, alanine 51, arginine 98, valine 122, aspartate 278, glycine 290, and isoleucine 291 each contribute to the FAD site. Valine 368 is an a 2,3-bis-O-(geranylgeranyl)-sn-glycerol 1-phospholipid binding site.

Belongs to the geranylgeranyl reductase family. DGGGPL reductase subfamily. FAD serves as cofactor.

The enzyme catalyses a 2,3-bis-O-phytanyl-sn-glycerol 1-phospholipid + 8 A = a 2,3-bis-O-(geranylgeranyl)-sn-glycerol 1-phospholipid + 8 AH2. The catalysed reaction is 2,3-bis-O-(phytanyl)-sn-glycerol 1-phosphate + 8 A = 2,3-bis-O-(geranylgeranyl)-sn-glycerol 1-phosphate + 8 AH2. It catalyses the reaction CDP-2,3-bis-O-(geranylgeranyl)-sn-glycerol + 8 AH2 = CDP-2,3-bis-O-(phytanyl)-sn-glycerol + 8 A. It carries out the reaction archaetidylserine + 8 AH2 = 2,3-bis-O-phytanyl-sn-glycero-3-phospho-L-serine + 8 A. The protein operates within membrane lipid metabolism; glycerophospholipid metabolism. Functionally, is involved in the reduction of 2,3-digeranylgeranylglycerophospholipids (unsaturated archaeols) into 2,3-diphytanylglycerophospholipids (saturated archaeols) in the biosynthesis of archaeal membrane lipids. Catalyzes the formation of archaetidic acid (2,3-di-O-phytanyl-sn-glyceryl phosphate) from 2,3-di-O-geranylgeranylglyceryl phosphate (DGGGP) via the hydrogenation of each double bond of the isoprenoid chains. Is also probably able to reduce double bonds of geranyl groups in CDP-2,3-bis-O-(geranylgeranyl)-sn-glycerol and archaetidylserine, thus acting at various stages in the biosynthesis of archaeal membrane lipids. This chain is Digeranylgeranylglycerophospholipid reductase, found in Methanococcus maripaludis (strain C5 / ATCC BAA-1333).